We begin with the raw amino-acid sequence, 308 residues long: MTLEVTFLGTSGAVPTTERNPSSVFVRRNGDAFLFDAGEATQRQMMRYKTGFGVSDVFITHGHGDHVFGLPGLVHTWDFNDRTDPLTIHVPRGLRGDIEDLVFSAGGDVGYPVRITEATPGAVVRSHDDYEVRAFETAHSTASVGYALVEDDRTGRFDRARAEELGVPVGPKFSTLHDGQPVELDDGTVVSPEQVVGDPRPGRTLVYTGDTRPHDPVVSAAEDADLLIHDATFANDASERAAETGHSTAGEAADVATEAGAKALALTHVSSRYAGDASEISAGASGFDGEAFVAHDGLTHEIPFPDAD.

7 residues coordinate Zn(2+): histidine 61, histidine 63, aspartate 65, histidine 66, histidine 139, aspartate 210, and histidine 268. Catalysis depends on aspartate 65, which acts as the Proton acceptor.

Belongs to the RNase Z family. In terms of assembly, homodimer. Zn(2+) is required as a cofactor.

It carries out the reaction Endonucleolytic cleavage of RNA, removing extra 3' nucleotides from tRNA precursor, generating 3' termini of tRNAs. A 3'-hydroxy group is left at the tRNA terminus and a 5'-phosphoryl group is left at the trailer molecule.. In terms of biological role, zinc phosphodiesterase, which displays some tRNA 3'-processing endonuclease activity. Probably involved in tRNA maturation, by removing a 3'-trailer from precursor tRNA. The chain is Ribonuclease Z from Halobacterium salinarum (strain ATCC 700922 / JCM 11081 / NRC-1) (Halobacterium halobium).